The following is a 476-amino-acid chain: Neuropeptide receptor 18 (476 aa).

At 1-61 the chain is on the extracellular side; the sequence is MSSFYNEAKF…LSNHDNSSLM (61 aa). N-linked (GlcNAc...) asparagine glycans are attached at residues asparagine 43 and asparagine 57. Residues 62 to 82 form a helical membrane-spanning segment; sequence LIAGFYALLFMFGTCGNAAIL. At 83–102 the chain is on the cytoplasmic side; sequence AVVHHVKGQDPRSRHNTTLT. A helical membrane pass occupies residues 103–123; it reads YICILSIVDFLSMLPIPMTII. The Extracellular portion of the chain corresponds to 124-139; the sequence is DQILGFWMFDTFACKL. The cysteines at positions 137 and 228 are disulfide-linked. Residues 140–160 traverse the membrane as a helical segment; that stretch reads FRLLEHIGKIFSTFILVAFSI. Residues 161 to 179 are Cytoplasmic-facing; the sequence is DRYCAVCHPLQVRVRNQRT. Residues 180-200 form a helical membrane-spanning segment; the sequence is VFVFLGIMFFVTCVMLSPILL. Residues 201–236 lie on the Extracellular side of the membrane; that stretch reads YAHSKELVMHEKVDLDQEVITRMHLYKCVDDLGREL. Residues 237–257 form a helical membrane-spanning segment; that stretch reads FVVFTLYSFVLAYLMPLLFMI. Residues 258 to 291 are Cytoplasmic-facing; that stretch reads YFYYEMLIRLFKQANVIKQTLVGRRSGGEEKKLT. The chain crosses the membrane as a helical span at residues 292–312; it reads IPVGHIAIYTLAICSFHFICW. Residues 313–334 lie on the Extracellular side of the membrane; sequence TPYWISILYSLYEELYQDTKST. A helical transmembrane segment spans residues 335-355; it reads ASPPTYAFIYFMYGVHALPYI. Topologically, residues 356–476 are cytoplasmic; the sequence is NSASNFILYG…ITPDTESVIL (121 aa).

It belongs to the G-protein coupled receptor 1 family. Expressed in sensory neurons including ASER.

Its subcellular location is the cell membrane. Functionally, probable receptor for neuropeptide ligand nlp-9 that plays a role in octopamine signaling and specifically, the octapamine inhibition of aversion responses in olfactory sensory neurons. In AWB olfactory sensory neurons, required for the detection of preferred food sources. The chain is Neuropeptide receptor 18 from Caenorhabditis elegans.